We begin with the raw amino-acid sequence, 434 residues long: Forkhead box protein A2 (434 aa).

Positions 149–243 (KPPYSYISLI…ENGCYLRRQK (95 aa)) form a DNA-binding region, fork-head. Residues 249–262 (KKPSLREGGGKKLS) are compositionally biased toward basic and acidic residues. The disordered stretch occupies residues 249–339 (KKPSLREGGG…VLSHEAQSHL (91 aa)). Composition is skewed to low complexity over residues 263-291 (EGSS…SSSP) and 317-333 (ASQA…VLSH).

The protein localises to the nucleus. Its function is as follows. Acts as a transcriptional activator during early development, limiting the extent of mesoderm formation in the gastrula. Binds to DNA via the target sequence 5'-GT[AC]AACA-3', with 5'-GTAAACA-3' being the preferred binding site. This is Forkhead box protein A2 from Xenopus tropicalis (Western clawed frog).